The primary structure comprises 363 residues: Holliday junction branch migration complex subunit RuvB (363 aa).

Residues 1–32 form a disordered region; sequence MAIQTDSFAAAPAPSSGSTRRLISAAPTSPNE. Residues 7–18 are compositionally biased toward low complexity; the sequence is SFAAAPAPSSGS. The segment at 13–200 is large ATPase domain (RuvB-L); sequence APSSGSTRRL…FGIVARLEFY (188 aa). ATP-binding positions include Leu39, Arg40, Gly81, Lys84, Thr85, Thr86, 147–149, Arg190, Tyr200, and Arg237; that span reads EDY. Thr85 serves as a coordination point for Mg(2+). The segment at 201 to 271 is small ATPAse domain (RuvB-S); sequence TPEELVRIVT…IAELALTMLD (71 aa). The head domain (RuvB-H) stretch occupies residues 274 to 363; the sequence is PRGFDVMDRK…GPVGSDLFEG (90 aa). DNA-binding residues include Arg329 and Arg334.

It belongs to the RuvB family. In terms of assembly, homohexamer. Forms an RuvA(8)-RuvB(12)-Holliday junction (HJ) complex. HJ DNA is sandwiched between 2 RuvA tetramers; dsDNA enters through RuvA and exits via RuvB. An RuvB hexamer assembles on each DNA strand where it exits the tetramer. Each RuvB hexamer is contacted by two RuvA subunits (via domain III) on 2 adjacent RuvB subunits; this complex drives branch migration. In the full resolvosome a probable DNA-RuvA(4)-RuvB(12)-RuvC(2) complex forms which resolves the HJ.

The protein localises to the cytoplasm. The enzyme catalyses ATP + H2O = ADP + phosphate + H(+). Its function is as follows. The RuvA-RuvB-RuvC complex processes Holliday junction (HJ) DNA during genetic recombination and DNA repair, while the RuvA-RuvB complex plays an important role in the rescue of blocked DNA replication forks via replication fork reversal (RFR). RuvA specifically binds to HJ cruciform DNA, conferring on it an open structure. The RuvB hexamer acts as an ATP-dependent pump, pulling dsDNA into and through the RuvAB complex. RuvB forms 2 homohexamers on either side of HJ DNA bound by 1 or 2 RuvA tetramers; 4 subunits per hexamer contact DNA at a time. Coordinated motions by a converter formed by DNA-disengaged RuvB subunits stimulates ATP hydrolysis and nucleotide exchange. Immobilization of the converter enables RuvB to convert the ATP-contained energy into a lever motion, pulling 2 nucleotides of DNA out of the RuvA tetramer per ATP hydrolyzed, thus driving DNA branch migration. The RuvB motors rotate together with the DNA substrate, which together with the progressing nucleotide cycle form the mechanistic basis for DNA recombination by continuous HJ branch migration. Branch migration allows RuvC to scan DNA until it finds its consensus sequence, where it cleaves and resolves cruciform DNA. The chain is Holliday junction branch migration complex subunit RuvB from Leptothrix cholodnii (strain ATCC 51168 / LMG 8142 / SP-6) (Leptothrix discophora (strain SP-6)).